Reading from the N-terminus, the 71-residue chain is Small ribosomal subunit protein bS21 (71 aa).

It belongs to the bacterial ribosomal protein bS21 family.

The sequence is that of Small ribosomal subunit protein bS21 from Vesicomyosocius okutanii subsp. Calyptogena okutanii (strain HA).